We begin with the raw amino-acid sequence, 152 residues long: Phospholipase A2 GL16-1 (152 aa).

Residues 1-21 form the signal peptide; it reads MNPAHLLVLLAVCVSLLGAST. The propeptide occupies 22 to 27; the sequence is IPPLPL. 7 disulfide bridges follow: cysteine 38–cysteine 104, cysteine 54–cysteine 151, cysteine 56–cysteine 72, cysteine 71–cysteine 132, cysteine 78–cysteine 125, cysteine 88–cysteine 118, and cysteine 111–cysteine 123. Positions 55, 57, and 59 each coordinate Ca(2+). Histidine 75 is an active-site residue. Position 76 (aspartate 76) interacts with Ca(2+). The active site involves aspartate 126.

The protein belongs to the phospholipase A2 family. Group I subfamily. Ca(2+) is required as a cofactor.

It localises to the secreted. It catalyses the reaction a 1,2-diacyl-sn-glycero-3-phosphocholine + H2O = a 1-acyl-sn-glycero-3-phosphocholine + a fatty acid + H(+). PA2 catalyzes the calcium-dependent hydrolysis of the 2-acyl groups in 3-sn-phosphoglycerides. This Laticauda semifasciata (Black-banded sea krait) protein is Phospholipase A2 GL16-1.